The sequence spans 356 residues: Putative mitogen-activated protein kinase 14C (356 aa).

The region spanning 20 to 305 (YEFVRFLGGG…AAEAMLHPYL (286 aa)) is the Protein kinase domain. ATP is bound by residues 26–34 (LGGGSFGQV) and K49. D147 serves as the catalytic Proton acceptor. T177 bears the Phosphothreonine mark.

This sequence belongs to the protein kinase superfamily. CMGC Ser/Thr protein kinase family. MAP kinase subfamily. Requires Mg(2+) as cofactor. In terms of processing, the phosphorylation on Thr-177 activates the enzyme. A conserved Tyr, which must also be phosphorylated to activate the enzyme in closely related sequences, is replaced by His-179 in this sequence.

The enzyme catalyses L-seryl-[protein] + ATP = O-phospho-L-seryl-[protein] + ADP + H(+). It catalyses the reaction L-threonyl-[protein] + ATP = O-phospho-L-threonyl-[protein] + ADP + H(+). In terms of biological role, kinase involved in a signal transduction pathway. This is Putative mitogen-activated protein kinase 14C (p38c) from Drosophila melanogaster (Fruit fly).